Reading from the N-terminus, the 473-residue chain is MDYFPIFCQLQHKACLLVGGGEIAERKARLLLDAGALVTVNACEFTPQFHHWADQGQLSLISGEFVPELLADKWLVIAATDQLSVNALVYQSANQQRIFCNVVDDPKRTSFIMPSIIDRSPIMIAVSSGGKAPVLARLLREKLEALLPQHLGQLAQLAGNLRQRVKQHFAAMTERRRFWEKLLTHDRLAQSLANNDHVQADQHVEQLFSAPLTDRGEVVLVGAGPGDAGLLTLKGLQQIQQADVVVYDRLVSDEVMNLVRRDAERIFVGKQSGHHCVPQEQINQILLQQAQSGKRVVRLKGGDPFIFGRGGEELEELAGYGIPFSVVPGITAASGCSAYSGIPLTHRDHAQSVRLVTGHAKKEGQLDWANLAAEKQTLVFYMGLSQAGEIQQQLIQHGMPATTQVALVENGTSRHQRVVSGELSQLALLSQQVSSPSLIIVGSVVSLREKLNWFSSRHHDDQPKVTECVAHVG.

Residues M1 to V204 form a precorrin-2 dehydrogenase /sirohydrochlorin ferrochelatase region. Residues E22–I23 and C43–E44 contribute to the NAD(+) site. Residue S128 is modified to Phosphoserine. The segment at G216–G473 is uroporphyrinogen-III C-methyltransferase. An S-adenosyl-L-methionine-binding site is contributed by P225. The active-site Proton acceptor is D248. K270 (proton donor) is an active-site residue. S-adenosyl-L-methionine-binding positions include G301–D303, I306, T331–A332, M382, and G411.

In the N-terminal section; belongs to the precorrin-2 dehydrogenase / sirohydrochlorin ferrochelatase family. The protein in the C-terminal section; belongs to the precorrin methyltransferase family.

It catalyses the reaction uroporphyrinogen III + 2 S-adenosyl-L-methionine = precorrin-2 + 2 S-adenosyl-L-homocysteine + H(+). The catalysed reaction is precorrin-2 + NAD(+) = sirohydrochlorin + NADH + 2 H(+). The enzyme catalyses siroheme + 2 H(+) = sirohydrochlorin + Fe(2+). The protein operates within cofactor biosynthesis; adenosylcobalamin biosynthesis; precorrin-2 from uroporphyrinogen III: step 1/1. Its pathway is cofactor biosynthesis; adenosylcobalamin biosynthesis; sirohydrochlorin from precorrin-2: step 1/1. It functions in the pathway porphyrin-containing compound metabolism; siroheme biosynthesis; precorrin-2 from uroporphyrinogen III: step 1/1. It participates in porphyrin-containing compound metabolism; siroheme biosynthesis; siroheme from sirohydrochlorin: step 1/1. The protein operates within porphyrin-containing compound metabolism; siroheme biosynthesis; sirohydrochlorin from precorrin-2: step 1/1. In terms of biological role, multifunctional enzyme that catalyzes the SAM-dependent methylations of uroporphyrinogen III at position C-2 and C-7 to form precorrin-2 via precorrin-1. Then it catalyzes the NAD-dependent ring dehydrogenation of precorrin-2 to yield sirohydrochlorin. Finally, it catalyzes the ferrochelation of sirohydrochlorin to yield siroheme. The polypeptide is Siroheme synthase 2 (Yersinia pseudotuberculosis serotype O:1b (strain IP 31758)).